Here is a 569-residue protein sequence, read N- to C-terminus: Urease subunit alpha (569 aa).

Residues His136, His138, and Lys219 each contribute to the Ni(2+) site. Lys219 carries the post-translational modification N6-carboxylysine. His221 provides a ligand contact to substrate. 2 residues coordinate Ni(2+): His248 and His274. The Proton donor role is filled by His322. Residue Asp362 participates in Ni(2+) binding.

This sequence belongs to the metallo-dependent hydrolases superfamily. Urease alpha subunit family. In terms of assembly, heterotrimer of UreA (gamma), UreB (beta) and UreC (alpha) subunits. Three heterotrimers associate to form the active enzyme. It depends on Ni cation as a cofactor. In terms of processing, carboxylation allows a single lysine to coordinate two nickel ions.

The protein resides in the cytoplasm. It catalyses the reaction urea + 2 H2O + H(+) = hydrogencarbonate + 2 NH4(+). It participates in nitrogen metabolism; urea degradation; CO(2) and NH(3) from urea (urease route): step 1/1. The chain is Urease subunit alpha from Dinoroseobacter shibae (strain DSM 16493 / NCIMB 14021 / DFL 12).